The chain runs to 310 residues: tRNA-5-methyluridine(54) 2-sulfurtransferase (310 aa).

Residues Cys-3, Cys-6, Cys-22, and His-25 each contribute to the Zn(2+) site. ATP-binding residues include Ala-53 and Ile-79. 2 residues coordinate [4Fe-4S] cluster: Cys-128 and Cys-131. Cysteines 128 and 220 form a disulfide. The ATP site is built by Lys-135 and Gly-154. A [4Fe-4S] cluster-binding site is contributed by Cys-220. 4 residues coordinate Zn(2+): Cys-272, Cys-275, Cys-284, and Cys-287.

The protein belongs to the TtcA family. TtuA subfamily. Homodimer. [4Fe-4S] cluster is required as a cofactor. The cofactor is Mg(2+).

The catalysed reaction is 5-methyluridine(54) in tRNA + hydrogen sulfide + ATP = 5-methyl-2-thiouridine(54) in tRNA + AMP + diphosphate. The protein operates within tRNA modification. Catalyzes the ATP-dependent 2-thiolation of 5-methyluridine residue at position 54 in the T loop of tRNAs, leading to 5-methyl-2-thiouridine (m(5)s(2)U or s(2)T). This modification allows thermal stabilization of tRNAs in thermophilic microorganisms, and is required for cell growth at high temperatures. Can use free sulfide as sulfur source in vitro, which may be also the sulfur source in vivo. This is tRNA-5-methyluridine(54) 2-sulfurtransferase from Pyrococcus horikoshii (strain ATCC 700860 / DSM 12428 / JCM 9974 / NBRC 100139 / OT-3).